The sequence spans 503 residues: Arabinose import ATP-binding protein AraG (503 aa).

ABC transporter domains lie at 5–240 (LRFD…MVGR) and 253–497 (LGDV…LPQG). Position 37–44 (37–44 (GENGAGKS)) interacts with ATP.

This sequence belongs to the ABC transporter superfamily. Arabinose importer (TC 3.A.1.2.2) family. The complex is composed of two ATP-binding proteins (AraG), two transmembrane proteins (AraH) and a solute-binding protein (AraF).

Its subcellular location is the cell inner membrane. It catalyses the reaction L-arabinose(out) + ATP + H2O = L-arabinose(in) + ADP + phosphate + H(+). Functionally, part of the ABC transporter complex AraFGH involved in arabinose import. Responsible for energy coupling to the transport system. This is Arabinose import ATP-binding protein AraG from Burkholderia pseudomallei (strain K96243).